The primary structure comprises 295 residues: 33 kDa chaperonin (295 aa).

2 cysteine pairs are disulfide-bonded: C238-C240 and C271-C274.

Belongs to the HSP33 family. Post-translationally, under oxidizing conditions two disulfide bonds are formed involving the reactive cysteines. Under reducing conditions zinc is bound to the reactive cysteines and the protein is inactive.

It localises to the cytoplasm. Its function is as follows. Redox regulated molecular chaperone. Protects both thermally unfolding and oxidatively damaged proteins from irreversible aggregation. Plays an important role in the bacterial defense system toward oxidative stress. The protein is 33 kDa chaperonin of Levilactobacillus brevis (strain ATCC 367 / BCRC 12310 / CIP 105137 / JCM 1170 / LMG 11437 / NCIMB 947 / NCTC 947) (Lactobacillus brevis).